A 65-amino-acid polypeptide reads, in one-letter code: DNA gyrase inhibitor YacG (65 aa).

Zn(2+) contacts are provided by Cys8, Cys11, Cys27, and Cys31. Residues 43-65 (SYRIPDTGKDSEKQENDPSGSEK) form a disordered region. A compositionally biased stretch (basic and acidic residues) spans 48–65 (DTGKDSEKQENDPSGSEK).

This sequence belongs to the DNA gyrase inhibitor YacG family. Interacts with GyrB. Zn(2+) is required as a cofactor.

Functionally, inhibits all the catalytic activities of DNA gyrase by preventing its interaction with DNA. Acts by binding directly to the C-terminal domain of GyrB, which probably disrupts DNA binding by the gyrase. The protein is DNA gyrase inhibitor YacG of Nitrosospira multiformis (strain ATCC 25196 / NCIMB 11849 / C 71).